Here is a 273-residue protein sequence, read N- to C-terminus: SPRY domain-containing SOCS box protein 4 (273 aa).

Positions 1–34 (MGQKLSGSLKSVEVREPALRPAKRELRGAEPGRP) are disordered. The span at 12–34 (VEVREPALRPAKRELRGAEPGRP) shows a compositional bias: basic and acidic residues. Residues 34–233 (PARLDQLLDM…MRYINGLDPE (200 aa)) form the B30.2/SPRY domain. Residues 234 to 273 (PLPLMDLCRRSIRSALGRQRLQDISSLPLPQSLKNYLQYQ) enclose the SOCS box domain.

This sequence belongs to the SPSB family. Component of the probable ECS(SPSB4) E3 ubiquitin-protein ligase complex which contains CUL5, RNF7/RBX2, Elongin BC complex and SPSB4. Interacts with CUL5; RNF7; ELOB and ELOC. Interacts with MET. Interacts (via B30.2/SPRY domain) with PAWR; this interaction occurs in association with the Elongin BC complex. Interacts with NOS2. Interacts with EPHB2.

It is found in the cytoplasm. The protein resides in the cytosol. It participates in protein modification; protein ubiquitination. In terms of biological role, substrate recognition component of a SCF-like ECS (Elongin BC-CUL2/5-SOCS-box protein) E3 ubiquitin-protein ligase complex which mediates the ubiquitination and subsequent proteasomal degradation of target proteins. Negatively regulates nitric oxide (NO) production and limits cellular toxicity in activated macrophages by mediating the ubiquitination and proteasomal degradation of NOS2. Acts as a bridge which links NOS2 with the ECS E3 ubiquitin ligase complex components ELOC and CUL5. Diminishes EphB2-dependent cell repulsive responses by mediating the ubiquitination and degradation of EphB2/CTF2. Regulates cellular clock function by mediating the ubiquitin/proteasome-dependent degradation of the circadian transcriptional repressor NR1D1. The polypeptide is SPRY domain-containing SOCS box protein 4 (SPSB4) (Homo sapiens (Human)).